Reading from the N-terminus, the 146-residue chain is Basic phospholipase A2 beta-bungarotoxin A2 chain (146 aa).

A signal peptide spans 1–19; it reads MNPAHLLVLSAVCVSLLGA. Residues 20–27 constitute a propeptide that is removed on maturation; sequence SNIPPQSL. 6 disulfide bridges follow: Cys-54-Cys-145, Cys-56-Cys-72, Cys-71-Cys-126, Cys-78-Cys-119, Cys-87-Cys-112, and Cys-105-Cys-117. Ca(2+)-binding residues include Tyr-55, Gly-57, and Gly-59. The active site involves His-75. Asp-76 is a binding site for Ca(2+). Asp-120 is a catalytic residue.

The protein belongs to the phospholipase A2 family. Group I subfamily. D49 sub-subfamily. As to quaternary structure, heterodimer; disulfide-linked. The A chain has phospholipase A2 activity and the B chain shows homology with the basic protease inhibitors. Ca(2+) is required as a cofactor. Expressed by the venom gland.

The protein localises to the secreted. The enzyme catalyses a 1,2-diacyl-sn-glycero-3-phosphocholine + H2O = a 1-acyl-sn-glycero-3-phosphocholine + a fatty acid + H(+). Snake venom phospholipase A2 (PLA2) that inhibits neuromuscular transmission by blocking acetylcholine release from the nerve termini. PLA2 catalyzes the calcium-dependent hydrolysis of the 2-acyl groups in 3-sn-phosphoglycerides. The polypeptide is Basic phospholipase A2 beta-bungarotoxin A2 chain (Bungarus flaviceps flaviceps (Red-headed krait)).